The sequence spans 457 residues: Multidrug resistance protein MdtK (457 aa).

The next 12 membrane-spanning stretches (helical) occupy residues 11 to 31, 53 to 73, 93 to 113, 127 to 147, 160 to 180, 189 to 209, 243 to 263, 276 to 296, 314 to 334, 357 to 377, 387 to 407, and 418 to 438; these read LLAL…MGFV, IWLP…PVIA, WLAG…GYII, AVGY…FQVA, GMVM…IFIY, GGVG…FSMI, LPIA…ALLV, IALN…AAVT, AART…LFTV, LMLL…GSGI, IFFI…YILA, and PAGF…LMML.

Belongs to the multi antimicrobial extrusion (MATE) (TC 2.A.66.1) family. MdtK subfamily.

It is found in the cell inner membrane. Multidrug efflux pump that functions probably as a Na(+)/drug antiporter. The sequence is that of Multidrug resistance protein MdtK from Enterobacter sp. (strain 638).